A 153-amino-acid chain; its full sequence is E3 ubiquitin-protein ligase AIRP1 (153 aa).

The RING-type; atypical zinc-finger motif lies at 104–145 (CPICLEEYEIDNPKLLTKCGHDFHLACILAWMERSEACPVCD).

It is found in the cytoplasm. The protein localises to the cytosol. It catalyses the reaction S-ubiquitinyl-[E2 ubiquitin-conjugating enzyme]-L-cysteine + [acceptor protein]-L-lysine = [E2 ubiquitin-conjugating enzyme]-L-cysteine + N(6)-ubiquitinyl-[acceptor protein]-L-lysine.. Possesses E3 ubiquitin-protein ligase activity in vitro when associated with the E2 enzyme UBC8 in vitro. Plays combinatory roles with AIRP2 in the positive regulation of the abscisic acid-mediated drought stress response. The sequence is that of E3 ubiquitin-protein ligase AIRP1 from Arabidopsis thaliana (Mouse-ear cress).